The following is a 213-amino-acid chain: Ribonuclease HII (213 aa).

In terms of domain architecture, RNase H type-2 spans 1–206 (MICGVDEAGK…VSTLLAKKTQ (206 aa)). A divalent metal cation is bound by residues Asp6, Glu7, and Asp101.

It belongs to the RNase HII family. It depends on Mn(2+) as a cofactor. Mg(2+) serves as cofactor.

It localises to the cytoplasm. The catalysed reaction is Endonucleolytic cleavage to 5'-phosphomonoester.. Its function is as follows. Endonuclease that specifically degrades the RNA of RNA-DNA hybrids. This Methanoregula boonei (strain DSM 21154 / JCM 14090 / 6A8) protein is Ribonuclease HII.